The sequence spans 1532 residues: Glycogen debranching enzyme (1532 aa).

Ser64 carries the phosphoserine modification. Active-site residues include Asp526, His529, and Asp627.

The protein belongs to the glycogen debranching enzyme family. In terms of assembly, monomer. Interacts with NHLRC1/malin. In terms of processing, the N-terminus is blocked. Ubiquitinated. As to expression, liver, kidney and lymphoblastoid cells express predominantly isoform 1; whereas muscle and heart express not only isoform 1, but also muscle-specific isoform mRNAs (isoforms 2, 3 and 4). Isoforms 5 and 6 are present in both liver and muscle.

It is found in the cytoplasm. It carries out the reaction Transfers a segment of a (1-&gt;4)-alpha-D-glucan to a new position in an acceptor, which may be glucose or a (1-&gt;4)-alpha-D-glucan.. The enzyme catalyses Hydrolysis of (1-&gt;6)-alpha-D-glucosidic branch linkages in glycogen phosphorylase limit dextrin.. Its function is as follows. Multifunctional enzyme acting as 1,4-alpha-D-glucan:1,4-alpha-D-glucan 4-alpha-D-glycosyltransferase and amylo-1,6-glucosidase in glycogen degradation. The protein is Glycogen debranching enzyme (AGL) of Homo sapiens (Human).